The primary structure comprises 187 residues: Ponticulin-like protein K (187 aa).

A signal peptide spans 1 to 19 (MKNLILLFLLISIINLIQS). N-linked (GlcNAc...) asparagine glycans are attached at residues asparagine 31, asparagine 70, asparagine 86, asparagine 93, asparagine 119, asparagine 128, asparagine 146, asparagine 160, and asparagine 161. Positions 115–146 (PSPSNSSNPSPSPNTTSSSSLSSSSLNSNEPN) are enriched in low complexity. The disordered stretch occupies residues 115-161 (PSPSNSSNPSPSPNTTSSSSLSSSSLNSNEPNQTTKPPKTNEPQKNN). A compositionally biased stretch (polar residues) spans 147–161 (QTTKPPKTNEPQKNN). Asparagine 161 carries the GPI-like-anchor amidated asparagine lipid modification. A propeptide spans 162-187 (STSNIPNFFAIFGFLVLIIFILGDKI) (removed in mature form).

This sequence belongs to the ponticulin family. In terms of processing, the GPI-like-anchor contains a phosphoceramide group, rather than a phosphatidyl group.

It is found in the cell membrane. Its function is as follows. Binds F-actin and nucleates actin assembly. The protein is Ponticulin-like protein K (ponK) of Dictyostelium discoideum (Social amoeba).